The following is a 258-amino-acid chain: Acetylglutamate kinase (258 aa).

Substrate contacts are provided by residues 41 to 42, Arg63, and Asn156; that span reads GG.

Belongs to the acetylglutamate kinase family. ArgB subfamily.

The protein localises to the cytoplasm. The enzyme catalyses N-acetyl-L-glutamate + ATP = N-acetyl-L-glutamyl 5-phosphate + ADP. It participates in amino-acid biosynthesis; L-arginine biosynthesis; N(2)-acetyl-L-ornithine from L-glutamate: step 2/4. Functionally, catalyzes the ATP-dependent phosphorylation of N-acetyl-L-glutamate. This Geobacillus kaustophilus (strain HTA426) protein is Acetylglutamate kinase.